The sequence spans 184 residues: Ribosome-recycling factor (184 aa).

It belongs to the RRF family.

The protein resides in the cytoplasm. Functionally, responsible for the release of ribosomes from messenger RNA at the termination of protein biosynthesis. May increase the efficiency of translation by recycling ribosomes from one round of translation to another. The polypeptide is Ribosome-recycling factor (Fervidobacterium nodosum (strain ATCC 35602 / DSM 5306 / Rt17-B1)).